An 85-amino-acid chain; its full sequence is uncharacterized protein (85 aa).

The signal sequence occupies residues 1 to 21 (MRPLLCALAGLALLCAVGALA). A compositionally biased stretch (basic and acidic residues) spans 22 to 35 (DGREDRGSPGDTGE). Residues 22 to 85 (DGREDRGSPG…EVVHLPGSTL (64 aa)) are disordered. The segment covering 36–51 (RPAGPARGPGLEPARG) has biased composition (low complexity).

The protein localises to the secreted. This is an uncharacterized protein from Homo sapiens (Human).